The primary structure comprises 187 residues: Large ribosomal subunit protein uL6 (187 aa).

Positions 159-187 (PYKGKGIRYKGEQLSSNPERLQVRSKEVR) are disordered.

This sequence belongs to the universal ribosomal protein uL6 family. In terms of assembly, part of the 50S ribosomal subunit.

Functionally, this protein binds to the 23S rRNA, and is important in its secondary structure. It is located near the subunit interface in the base of the L7/L12 stalk, and near the tRNA binding site of the peptidyltransferase center. The chain is Large ribosomal subunit protein uL6 from Aquifex pyrophilus.